Here is a 411-residue protein sequence, read N- to C-terminus: Pyridinium-3,5-bisthiocarboxylic acid mononucleotide nickel insertion protein (411 aa).

The protein belongs to the LarC family.

The catalysed reaction is Ni(II)-pyridinium-3,5-bisthiocarboxylate mononucleotide = pyridinium-3,5-bisthiocarboxylate mononucleotide + Ni(2+). In terms of biological role, involved in the biosynthesis of a nickel-pincer cofactor ((SCS)Ni(II) pincer complex). Binds Ni(2+), and functions in nickel delivery to pyridinium-3,5-bisthiocarboxylic acid mononucleotide (P2TMN), to form the mature cofactor. Is thus probably required for the activation of nickel-pincer cofactor-dependent enzymes. The chain is Pyridinium-3,5-bisthiocarboxylic acid mononucleotide nickel insertion protein from Geobacillus kaustophilus (strain HTA426).